The chain runs to 61 residues: Large ribosomal subunit protein bL32 (61 aa).

The span at 1-16 (MAVPKKKTSKSRKNMR) shows a compositional bias: basic residues. Positions 1–20 (MAVPKKKTSKSRKNMRRAHD) are disordered.

It belongs to the bacterial ribosomal protein bL32 family.

This chain is Large ribosomal subunit protein bL32, found in Trichlorobacter lovleyi (strain ATCC BAA-1151 / DSM 17278 / SZ) (Geobacter lovleyi).